The sequence spans 43 residues: Potassium channel toxin gamma-KTx 4.7 (43 aa).

Disulfide bonds link Cys5-Cys23, Cys11-Cys34, Cys20-Cys39, and Cys24-Cys41.

It belongs to the ergtoxin family. Gamma-KTx 4 subfamily. Expressed by the venom gland.

Its subcellular location is the secreted. Reversibly blocks Kv11/ERG potassium channels. This chain is Potassium channel toxin gamma-KTx 4.7, found in Centruroides limpidus (Mexican scorpion).